A 622-amino-acid chain; its full sequence is Telomerase-associated protein of 75 kDa (622 aa).

As to quaternary structure, component of the telomerase holoenzyme complex, composed of the catalytic core (the catalytic subunit TERT, the telomerase RNA template component TER and TAP65/p65), which is associated with two heterotrimeric subcomplexes: (i) the replication protein A (RPA)-related subcomplex, composed of TEB1, RPA2/TEB2 and RPA3/TEB3 and (ii) the CST-like subcomplex, composed of TAP75/p75, TAP45/p45 and TAP19/p19. TEB1 and the CST-like subcomplex are tethered to the catalytic core by TAP50/p50.

It is found in the chromosome. It localises to the telomere. In terms of biological role, component of a CST-like subcomplex of the holoenzyme telomerase ribonucleoprotein complex, which stimulates telomerase complementary-strand synthesis. Telomerase is an essential ribonucleoprotein enzyme that copies new telomeric repeats onto chromosome ends by repetitively synthesizing the short telomere-repeat sequence 5'-TTGGGG-3' using an RNA template component TER. The CST-like subcomplex (also named 7-4-1) binds telomeric single-stranded DNA and coordinates telomere G-strand and C-strand synthesis. This is Telomerase-associated protein of 75 kDa from Tetrahymena thermophila (strain SB210).